The chain runs to 281 residues: Urease accessory protein UreD 2 (281 aa).

The protein belongs to the UreD family. In terms of assembly, ureD, UreF and UreG form a complex that acts as a GTP-hydrolysis-dependent molecular chaperone, activating the urease apoprotein by helping to assemble the nickel containing metallocenter of UreC. The UreE protein probably delivers the nickel.

Its subcellular location is the cytoplasm. Its function is as follows. Required for maturation of urease via the functional incorporation of the urease nickel metallocenter. This Pseudomonas syringae pv. tomato (strain ATCC BAA-871 / DC3000) protein is Urease accessory protein UreD 2.